The sequence spans 217 residues: Peptide methionine sulfoxide reductase MsrA 1 (217 aa).

Cysteine 57 is an active-site residue.

Belongs to the MsrA Met sulfoxide reductase family.

The catalysed reaction is L-methionyl-[protein] + [thioredoxin]-disulfide + H2O = L-methionyl-(S)-S-oxide-[protein] + [thioredoxin]-dithiol. It catalyses the reaction [thioredoxin]-disulfide + L-methionine + H2O = L-methionine (S)-S-oxide + [thioredoxin]-dithiol. Its function is as follows. Has an important function as a repair enzyme for proteins that have been inactivated by oxidation. Catalyzes the reversible oxidation-reduction of methionine sulfoxide in proteins to methionine. In Rhizobium meliloti (strain 1021) (Ensifer meliloti), this protein is Peptide methionine sulfoxide reductase MsrA 1 (msrA1).